The primary structure comprises 215 residues: Deoxyribose-phosphate aldolase (215 aa).

The Proton donor/acceptor role is filled by D89. K150 acts as the Schiff-base intermediate with acetaldehyde in catalysis. The Proton donor/acceptor role is filled by K174.

It belongs to the DeoC/FbaB aldolase family. DeoC type 1 subfamily.

It localises to the cytoplasm. It catalyses the reaction 2-deoxy-D-ribose 5-phosphate = D-glyceraldehyde 3-phosphate + acetaldehyde. The protein operates within carbohydrate degradation; 2-deoxy-D-ribose 1-phosphate degradation; D-glyceraldehyde 3-phosphate and acetaldehyde from 2-deoxy-alpha-D-ribose 1-phosphate: step 2/2. Its function is as follows. Catalyzes a reversible aldol reaction between acetaldehyde and D-glyceraldehyde 3-phosphate to generate 2-deoxy-D-ribose 5-phosphate. The polypeptide is Deoxyribose-phosphate aldolase (Natronomonas pharaonis (strain ATCC 35678 / DSM 2160 / CIP 103997 / JCM 8858 / NBRC 14720 / NCIMB 2260 / Gabara) (Halobacterium pharaonis)).